The sequence spans 967 residues: Transmembrane channel-like protein 5 (967 aa).

4 stretches are compositionally biased toward polar residues: residues M1–Y10, G21–E31, N53–N62, and Q168–P184. Residues M1–K240 form a disordered region. Topologically, residues M1–K420 are extracellular. The helical transmembrane segment at F421–G441 threads the bilayer. The Cytoplasmic portion of the chain corresponds to A442–T449. A helical membrane pass occupies residues G450–Y470. Over T471–Q487 the chain is Extracellular. The chain crosses the membrane as a helical span at residues L488 to S508. The Cytoplasmic segment spans residues M509–H581. The chain crosses the membrane as a helical span at residues V582 to L602. Residues A603 to P616 are Extracellular-facing. Residues G617 to Y637 traverse the membrane as a helical segment. The Cytoplasmic segment spans residues S638–N660. The helical transmembrane segment at I661–L681 threads the bilayer. The Extracellular portion of the chain corresponds to S682–D694. The helical transmembrane segment at I695–F715 threads the bilayer. Over L716–W749 the chain is Cytoplasmic. The chain crosses the membrane as a helical span at residues L750–F770. Over Y771–F796 the chain is Extracellular. The chain crosses the membrane as a helical span at residues F797–I817. Topologically, residues W818–N861 are cytoplasmic. Residues L862 to L882 form a helical membrane-spanning segment. The Extracellular portion of the chain corresponds to Y883–A967.

It belongs to the TMC family. As to expression, ubiquitously expressed.

It is found in the membrane. Functionally, probable component of an ion channel. Molecular function hasn't been characterized yet. The chain is Transmembrane channel-like protein 5 from Mus musculus (Mouse).